The primary structure comprises 534 residues: Probable glycine dehydrogenase (decarboxylating) subunit 2 (534 aa).

The residue at position 273 (Lys-273) is an N6-(pyridoxal phosphate)lysine.

The protein belongs to the GcvP family. C-terminal subunit subfamily. In terms of assembly, the glycine cleavage system is composed of four proteins: P, T, L and H. In this organism, the P 'protein' is a heterodimer of two subunits. Pyridoxal 5'-phosphate serves as cofactor.

It catalyses the reaction N(6)-[(R)-lipoyl]-L-lysyl-[glycine-cleavage complex H protein] + glycine + H(+) = N(6)-[(R)-S(8)-aminomethyldihydrolipoyl]-L-lysyl-[glycine-cleavage complex H protein] + CO2. The glycine cleavage system catalyzes the degradation of glycine. The P protein binds the alpha-amino group of glycine through its pyridoxal phosphate cofactor; CO(2) is released and the remaining methylamine moiety is then transferred to the lipoamide cofactor of the H protein. The chain is Probable glycine dehydrogenase (decarboxylating) subunit 2 from Bacillus cereus (strain ATCC 14579 / DSM 31 / CCUG 7414 / JCM 2152 / NBRC 15305 / NCIMB 9373 / NCTC 2599 / NRRL B-3711).